Reading from the N-terminus, the 205-residue chain is ATP phosphoribosyltransferase (205 aa).

The protein belongs to the ATP phosphoribosyltransferase family. Short subfamily.

Its subcellular location is the cytoplasm. It carries out the reaction 1-(5-phospho-beta-D-ribosyl)-ATP + diphosphate = 5-phospho-alpha-D-ribose 1-diphosphate + ATP. The protein operates within amino-acid biosynthesis; L-histidine biosynthesis; L-histidine from 5-phospho-alpha-D-ribose 1-diphosphate: step 1/9. Functionally, catalyzes the condensation of ATP and 5-phosphoribose 1-diphosphate to form N'-(5'-phosphoribosyl)-ATP (PR-ATP). Has a crucial role in the pathway because the rate of histidine biosynthesis seems to be controlled primarily by regulation of HisG enzymatic activity. The chain is ATP phosphoribosyltransferase from Thermococcus gammatolerans (strain DSM 15229 / JCM 11827 / EJ3).